We begin with the raw amino-acid sequence, 34 residues long: Leader peptide SpeFL (34 aa).

The short motif at 10–16 is the Ornithine recognition loop element; the sequence is HIRRTTH. Arg-13 contacts L-ornithine.

This sequence belongs to the speF operon leader peptide family. As to quaternary structure, binds ornithine in stalled 70S ribosomes, blocking the upper two-thirds of the exit tunnel. Contacts 23S rRNA and ribosomal proteins L4 and L22.

Its function is as follows. A small protein (arrest peptide) encoded upstream of inducible ornithine carboxylase gene (speF) that controls expression of downstream genes (speF and potE) by transcriptional and translational attenuation. Its expression controls transcription and translation of downstream SpeF; translation pausing at low Arg levels on this mRNA prevents premature Rho-dependent transcription termination of speF and also enhances SprF translation by preventing sequestration of its ribosome-binding site. In the presence of high Arg levels translation of this protein allows the formation of an speF mRNA structure that is degraded by RNase G. In Salmonella typhimurium (strain SL1344), this protein is Leader peptide SpeFL.